The following is a 431-amino-acid chain: Enolase (431 aa).

Residue Q167 participates in (2R)-2-phosphoglycerate binding. E209 (proton donor) is an active-site residue. Residues D246, E290, and D317 each coordinate Mg(2+). The (2R)-2-phosphoglycerate site is built by K342, R371, S372, and K393. K342 functions as the Proton acceptor in the catalytic mechanism.

It belongs to the enolase family. Component of the RNA degradosome, a multiprotein complex involved in RNA processing and mRNA degradation. Mg(2+) serves as cofactor.

Its subcellular location is the cytoplasm. It is found in the secreted. It localises to the cell surface. The enzyme catalyses (2R)-2-phosphoglycerate = phosphoenolpyruvate + H2O. It functions in the pathway carbohydrate degradation; glycolysis; pyruvate from D-glyceraldehyde 3-phosphate: step 4/5. Its function is as follows. Catalyzes the reversible conversion of 2-phosphoglycerate (2-PG) into phosphoenolpyruvate (PEP). It is essential for the degradation of carbohydrates via glycolysis. This Yersinia pestis bv. Antiqua (strain Antiqua) protein is Enolase.